Reading from the N-terminus, the 158-residue chain is Ribonuclease H (158 aa).

The RNase H type-1 domain maps to 2–143 (PEKIIELFTD…VDALLNRVMD (142 aa)). Mg(2+)-binding residues include Asp-11, Glu-49, Asp-71, and Asp-135.

Belongs to the RNase H family. Monomer. Mg(2+) serves as cofactor.

It is found in the cytoplasm. It carries out the reaction Endonucleolytic cleavage to 5'-phosphomonoester.. In terms of biological role, endonuclease that specifically degrades the RNA of RNA-DNA hybrids. The sequence is that of Ribonuclease H from Acidithiobacillus ferrooxidans (strain ATCC 23270 / DSM 14882 / CIP 104768 / NCIMB 8455) (Ferrobacillus ferrooxidans (strain ATCC 23270)).